An 829-amino-acid polypeptide reads, in one-letter code: Periplasmic nitrate reductase (829 aa).

Positions 1-29 form a signal peptide, tat-type signal; the sequence is MKMTRRAFVKANAAASAAAVAGITLPASA. The region spanning 41 to 97 is the 4Fe-4S Mo/W bis-MGD-type domain; it reads ITWDKAPCRFCGTGCSVLVGTQNGKVVATQGDPEAPVNKGLNCIKGYFLSKIMYGQD. Cysteine 48, cysteine 51, cysteine 55, and cysteine 83 together coordinate [4Fe-4S] cluster. Residues lysine 85, glutamine 152, asparagine 177, cysteine 181, 214 to 221, 245 to 249, 264 to 266, methionine 374, glutamine 378, asparagine 484, 510 to 511, lysine 533, aspartate 560, and 718 to 727 contribute to the Mo-bis(molybdopterin guanine dinucleotide) site; these read WGSNMAEM, STYYH, QSD, SD, and TGRVLEHWHT. A substrate-binding site is contributed by phenylalanine 794. Mo-bis(molybdopterin guanine dinucleotide) contacts are provided by asparagine 802 and lysine 819.

This sequence belongs to the prokaryotic molybdopterin-containing oxidoreductase family. NasA/NapA/NarB subfamily. Component of the periplasmic nitrate reductase NapAB complex composed of NapA and NapB. [4Fe-4S] cluster serves as cofactor. Mo-bis(molybdopterin guanine dinucleotide) is required as a cofactor. Post-translationally, predicted to be exported by the Tat system. The position of the signal peptide cleavage has not been experimentally proven.

It is found in the periplasm. It carries out the reaction 2 Fe(II)-[cytochrome] + nitrate + 2 H(+) = 2 Fe(III)-[cytochrome] + nitrite + H2O. Its function is as follows. Catalytic subunit of the periplasmic nitrate reductase complex NapAB. Receives electrons from NapB and catalyzes the reduction of nitrate to nitrite. This Vibrio campbellii (strain ATCC BAA-1116) protein is Periplasmic nitrate reductase.